A 520-amino-acid polypeptide reads, in one-letter code: J protein JJJ2 (520 aa).

One can recognise a J domain in the interval 7–71; sequence TYYSVLGLPT…SSKQEYDAIL (65 aa). Disordered stretches follow at residues 82–257 and 389–409; these read LGYK…DLQN and FESS…RGRP. The segment covering 91 to 100 has biased composition (low complexity); that stretch reads QNQSNNLNQQ. Residues 152–182 show a composition bias toward polar residues; that stretch reads TSKNSKEQQGSQETTNTSENLQRNAKGNKNN. A compositionally biased stretch (basic and acidic residues) spans 397–409; the sequence is ENHRSDFNLRGRP.

Its subcellular location is the cytoplasm. The protein localises to the nucleus. The chain is J protein JJJ2 (JJJ2) from Vanderwaltozyma polyspora (strain ATCC 22028 / DSM 70294 / BCRC 21397 / CBS 2163 / NBRC 10782 / NRRL Y-8283 / UCD 57-17) (Kluyveromyces polysporus).